We begin with the raw amino-acid sequence, 330 residues long: Biotin synthase (330 aa).

Residues 55-282 (NAVQRSTLLS…TAYVRLSAGR (228 aa)) enclose the Radical SAM core domain. Residues C70, C74, and C77 each coordinate [4Fe-4S] cluster. Residues C114, C145, C205, and R277 each coordinate [2Fe-2S] cluster.

It belongs to the radical SAM superfamily. Biotin synthase family. As to quaternary structure, homodimer. [4Fe-4S] cluster serves as cofactor. Requires [2Fe-2S] cluster as cofactor.

It carries out the reaction (4R,5S)-dethiobiotin + (sulfur carrier)-SH + 2 reduced [2Fe-2S]-[ferredoxin] + 2 S-adenosyl-L-methionine = (sulfur carrier)-H + biotin + 2 5'-deoxyadenosine + 2 L-methionine + 2 oxidized [2Fe-2S]-[ferredoxin]. Its pathway is cofactor biosynthesis; biotin biosynthesis; biotin from 7,8-diaminononanoate: step 2/2. Catalyzes the conversion of dethiobiotin (DTB) to biotin by the insertion of a sulfur atom into dethiobiotin via a radical-based mechanism. This chain is Biotin synthase, found in Methylibium petroleiphilum (strain ATCC BAA-1232 / LMG 22953 / PM1).